Consider the following 517-residue polypeptide: Bifunctional purine biosynthesis protein PurH (517 aa).

Residues 1–145 (MSPLALVSVS…KNHKYVSVLV (145 aa)) form the MGS-like domain.

It belongs to the PurH family.

The enzyme catalyses (6R)-10-formyltetrahydrofolate + 5-amino-1-(5-phospho-beta-D-ribosyl)imidazole-4-carboxamide = 5-formamido-1-(5-phospho-D-ribosyl)imidazole-4-carboxamide + (6S)-5,6,7,8-tetrahydrofolate. It carries out the reaction IMP + H2O = 5-formamido-1-(5-phospho-D-ribosyl)imidazole-4-carboxamide. The protein operates within purine metabolism; IMP biosynthesis via de novo pathway; 5-formamido-1-(5-phospho-D-ribosyl)imidazole-4-carboxamide from 5-amino-1-(5-phospho-D-ribosyl)imidazole-4-carboxamide (10-formyl THF route): step 1/1. It participates in purine metabolism; IMP biosynthesis via de novo pathway; IMP from 5-formamido-1-(5-phospho-D-ribosyl)imidazole-4-carboxamide: step 1/1. This is Bifunctional purine biosynthesis protein PurH from Prochlorococcus marinus (strain MIT 9215).